A 645-amino-acid polypeptide reads, in one-letter code: Transcription termination factor FttA (645 aa).

Residues 10–77 (APSNQNIMAT…IIVRIDESVR (68 aa)) form a KHa region. The interval 78–146 (KKEEDARKML…WTLRIRKATT (69 aa)) is KHb. The segment at 187–391 (EISLTALGGF…LLIESTYGAK (205 aa)) is metallo-beta-lactamase N-terminus. His-250, His-252, Asp-254, His-255, His-337, and Asp-360 together coordinate Zn(2+). A beta-Casp region spans residues 392-586 (EDIQPTRQEV…CRMEKLDGFS (195 aa)). A metallo-beta-lactamase C-terminus region spans residues 587–645 (GHSDYNQLTGFVQKLRPKLRRVLVNHGERRKSENLALAVRRMFRIPAHYPQIQESIKLF). Zn(2+) is bound at residue His-612.

This sequence belongs to the metallo-beta-lactamase superfamily. RNA-metabolizing metallo-beta-lactamase-like family. FttA subfamily. In terms of assembly, homodimer. Interacts with RNA polymerase (RNAP), interacts with the Spt4-Spt5 complex. It depends on Zn(2+) as a cofactor.

Functionally, terminates transcription on the whole genome. Termination is linked to FttA-mediated RNA cleavage and does not require NTP hydrolysis. Cleaves endonucleolytically at the RNA exit channel of RNA polymerase (RNAP); the 5'-3' exonuclease activity of this protein degrades the nascent RNA released from RNAP. Its function is as follows. Terminates transcription genome-wide in M.maripaludis. Restores wild-type growth to a strain of Methanococcus maripaludis depleted for this gene at 22 degrees Celsius and prevents transcriptional read-through. Transcription termination is most effective in vivo on RNAs with more than one U4-tract in their 3'-ends. Has endonuclease activity after U-rich tracts in transcription termination sequences. In Cenarchaeum symbiosum (strain A), this protein is Transcription termination factor FttA.